A 464-amino-acid polypeptide reads, in one-letter code: Chitobiosyldiphosphodolichol beta-mannosyltransferase (464 aa).

Over 1 to 2 the chain is Lumenal; the sequence is MA. The chain crosses the membrane as a helical span at residues 3–23; sequence ASCLVLLALCLLLPLLLLGGW. The Cytoplasmic portion of the chain corresponds to 24-99; it reads KRWRRGRTAR…ELQSLAVGPR (76 aa). The segment at residues 100-120 is an intramembrane region (helical); it reads VFQYGVKVVFQAMYLLWKLMW. Over 121 to 464 the chain is Cytoplasmic; that stretch reads REPGAYIFLQ…QTVLPLVMDT (344 aa). Position 242 is a phosphoserine (Ser242). The segment at 242-261 is disordered; it reads SPFRARSEPEDPATERSAFT.

Belongs to the glycosyltransferase group 1 family. Glycosyltransferase 33 subfamily.

The protein localises to the endoplasmic reticulum membrane. The catalysed reaction is an N,N'-diacetylchitobiosyl-diphospho-di-trans,poly-cis-dolichol + GDP-alpha-D-mannose = a beta-D-Man-(1-&gt;4)-beta-D-GlcNAc-(1-&gt;4)-alpha-D-GlcNAc-diphospho-di-trans,poly-cis-dolichol + GDP + H(+). Its pathway is protein modification; protein glycosylation. In terms of biological role, mannosyltransferase that operates in the biosynthetic pathway of dolichol-linked oligosaccharides, the glycan precursors employed in protein asparagine (N)-glycosylation. The assembly of dolichol-linked oligosaccharides begins on the cytosolic side of the endoplasmic reticulum membrane and finishes in its lumen. The sequential addition of sugars to dolichol pyrophosphate produces dolichol-linked oligosaccharides containing fourteen sugars, including two GlcNAcs, nine mannoses and three glucoses. Once assembled, the oligosaccharide is transferred from the lipid to nascent proteins by oligosaccharyltransferases. Catalyzes, on the cytoplasmic face of the endoplasmic reticulum, the addition of the first mannose residues to the dolichol-linked oligosaccharide chain, to produce Man1GlcNAc(2)-PP-dolichol core oligosaccharide. Man1GlcNAc(2)-PP-dolichol is a substrate for ALG2, the following enzyme in the biosynthetic pathway. The polypeptide is Chitobiosyldiphosphodolichol beta-mannosyltransferase (Pongo abelii (Sumatran orangutan)).